The following is a 377-amino-acid chain: Actin-related protein T2 (377 aa).

The protein belongs to the actin family.

The protein localises to the cytoplasm. Its subcellular location is the cytoskeleton. The sequence is that of Actin-related protein T2 (ACTRT2) from Macaca fascicularis (Crab-eating macaque).